The chain runs to 175 residues: Homeobox expressed in ES cells 1 (175 aa).

The interval 1–44 is disordered; the sequence is MSPNLQEGARLVEGKPSSTSFSIESILGLDQKKDDAPSMKPHRP. Residues 108 to 167 constitute a DNA-binding region (homeobox); it reads GRRPRTAFTQNQVEVLENVFRVNCYPGIDIREDLARKLNLEEDRIQIWFQNRRAKLKRSH.

It belongs to the ANF homeobox family. As to quaternary structure, interacts with TLE1.

The protein localises to the nucleus. Required for the normal development of the forebrain, eyes and other anterior structures such as the olfactory placodes and pituitary gland. Possible transcriptional repressor. Binds to the palindromic PIII sequence, 5'-AGCTTGAGTCTAATTGAATTAACTGTAC-3'. The chain is Homeobox expressed in ES cells 1 (HESX1) from Oryctolagus cuniculus (Rabbit).